A 432-amino-acid polypeptide reads, in one-letter code: Enolase (432 aa).

Residues 41–64 form a disordered region; that stretch reads QVPSGASTGSFEAHELRDGDPKRY. A compositionally biased stretch (basic and acidic residues) spans 52 to 64; the sequence is EAHELRDGDPKRY. Glutamine 168 contacts (2R)-2-phosphoglycerate. The Proton donor role is filled by glutamate 211. Mg(2+) contacts are provided by aspartate 248, glutamate 289, and aspartate 316. (2R)-2-phosphoglycerate is bound by residues lysine 341, arginine 370, serine 371, and lysine 392. Catalysis depends on lysine 341, which acts as the Proton acceptor.

The protein belongs to the enolase family. The cofactor is Mg(2+).

It is found in the cytoplasm. Its subcellular location is the secreted. The protein resides in the cell surface. The catalysed reaction is (2R)-2-phosphoglycerate = phosphoenolpyruvate + H2O. The protein operates within carbohydrate degradation; glycolysis; pyruvate from D-glyceraldehyde 3-phosphate: step 4/5. Its function is as follows. Catalyzes the reversible conversion of 2-phosphoglycerate (2-PG) into phosphoenolpyruvate (PEP). It is essential for the degradation of carbohydrates via glycolysis. This chain is Enolase, found in Synechocystis sp. (strain ATCC 27184 / PCC 6803 / Kazusa).